Reading from the N-terminus, the 271-residue chain is MSLLYHKQNQELSSGVRLIQDVNASNSPMKYTAVKVLEFSADSSYEETLEAFEAGIVVLEGKVTITADDQTFEDVGQRTSIFDKIPTDSVYVSTGLAFGIRAKQAAKILIAYAPTNQTFPVRLIRGNIHQVEHRGKYNNKRLVQNILPDNLPFADKLLLVEVYTDSANWSSYPPHRHDHDDLPAESLLEEIYYHEMRPKQGFVFQRVYTDDLSLDETMAVQNQDVVVVPKGYHPVGVPDGYDSYYLNVMAGPTRVWHFHNAPEHAWIIDRQ.

This sequence belongs to the isomerase IolB family.

The enzyme catalyses 5-deoxy-D-glucuronate = 5-dehydro-2-deoxy-D-gluconate. It participates in polyol metabolism; myo-inositol degradation into acetyl-CoA; acetyl-CoA from myo-inositol: step 4/7. Involved in the isomerization of 5-deoxy-glucuronate (5DG) to 5-dehydro-2-deoxy-D-gluconate (DKG or 2-deoxy-5-keto-D-gluconate). In Lacticaseibacillus casei (Lactobacillus casei), this protein is 5-deoxy-glucuronate isomerase.